Consider the following 72-residue polypeptide: Teretoxin Tan11.1 (72 aa).

A signal peptide spans 1 to 21; that stretch reads MLATKMSVTFCFLLMLTTVML. Positions 22–31 are excised as a propeptide; that stretch reads PTEAKTVAGR.

It belongs to the teretoxin H (TH) superfamily. In terms of processing, contains 4 disulfide bonds. As to expression, expressed by the venom duct.

It localises to the secreted. This Terebra anilis (Auger snail) protein is Teretoxin Tan11.1.